Consider the following 626-residue polypeptide: NAD-dependent malic enzyme, mitochondrial (626 aa).

The transit peptide at 1–34 (MAIFSNQMRLSSTLLKRLHQRVAAAVNSSSSRNF) directs the protein to the mitochondrion. Fumarate is bound by residues arginine 91 and arginine 125. The active-site Proton donor is tyrosine 146. A (S)-malate-binding site is contributed by arginine 199. Arginine 199 contacts NAD(+). Residue lysine 217 is the Proton acceptor of the active site. Positions 288, 289, and 312 each coordinate a divalent metal cation. Alanine 348 and alanine 351 together coordinate NAD(+). Residues asparagine 467 and asparagine 512 each contribute to the (S)-malate site.

It belongs to the malic enzymes family. Heterodimer of two related subunits. Mg(2+) serves as cofactor. Mn(2+) is required as a cofactor.

It is found in the mitochondrion matrix. The enzyme catalyses (S)-malate + NAD(+) = pyruvate + CO2 + NADH. The chain is NAD-dependent malic enzyme, mitochondrial from Solanum tuberosum (Potato).